Here is a 139-residue protein sequence, read N- to C-terminus: GSK3B-interacting protein (139 aa).

Positions 1 to 22 are disordered; it reads METDCNPMELSSMSGFEEGSEL. Residues 41–45 form a required for PRKAR2A interaction; contributes to a protective effect against H(2)O(2)-induced apoptosis region; that stretch reads VNDVL. The tract at residues 115–139 is interaction with GSK3B and acts as a GSK3B inhibitor; sequence SPAYREAFGNALLQRLEALKRDGQS.

The protein belongs to the GSKIP family. As to quaternary structure, forms a complex composed of PRKAR2A or PRKAR2B, GSK3B and GSKIP through GSKIP interaction; facilitates PKA-induced phosphorylation of GSK3B leading to GSK3B inactivation; recruits DNM1L through GSK3B for PKA-mediated phosphorylation of DNM1L; promotes beta-catenin degradation through GSK3B-induced phosphorylation of beta-catenin; stabilizes beta-catenin and enhances Wnt-induced signaling through PKA-induced phosphorylation of beta-catenin. Interacts with GSK3B; induces GSK3B-mediated phosphorylation of GSKIP and inhibits GSK3B kinase activity. In terms of processing, phosphorylated by GSK3B. Detected in heart, brain, placenta, liver, skeletal muscle, kidney, testis, lung and pancreas.

Its subcellular location is the cytoplasm. It is found in the nucleus. In terms of biological role, A-kinase anchoring protein for GSK3B and PKA that regulates or facilitates their kinase activity towards their targets. The ternary complex enhances Wnt-induced signaling by facilitating the GSK3B- and PKA-induced phosphorylation of beta-catenin leading to beta-catenin degradation and stabilization respectively. Upon cAMP activation, the ternary complex contributes to neuroprotection against oxidative stress-induced apoptosis by facilitating the PKA-induced phosphorylation of DML1 and PKA-induced inactivation of GSK3B. During neurite outgrowth promotes neuron proliferation; while increases beta-catenin-induced transcriptional activity through GSK3B kinase activity inhibition, reduces N-cadherin level to promote cell cycle progression. The protein is GSK3B-interacting protein of Homo sapiens (Human).